The chain runs to 98 residues: Large ribosomal subunit protein bL28 (98 aa).

In terms of assembly, part of the 50S ribosomal subunit.

In Thermus thermophilus (strain ATCC 27634 / DSM 579 / HB8), this protein is Large ribosomal subunit protein bL28 (rpmB).